The chain runs to 263 residues: Hydroxyacylglutathione hydrolase (263 aa).

Zn(2+) contacts are provided by histidine 55, histidine 57, aspartate 59, histidine 60, histidine 117, aspartate 134, and histidine 172.

This sequence belongs to the metallo-beta-lactamase superfamily. Glyoxalase II family. In terms of assembly, monomer. Zn(2+) serves as cofactor.

It catalyses the reaction an S-(2-hydroxyacyl)glutathione + H2O = a 2-hydroxy carboxylate + glutathione + H(+). The protein operates within secondary metabolite metabolism; methylglyoxal degradation; (R)-lactate from methylglyoxal: step 2/2. Functionally, thiolesterase that catalyzes the hydrolysis of S-D-lactoyl-glutathione to form glutathione and D-lactic acid. This is Hydroxyacylglutathione hydrolase from Shewanella baltica (strain OS155 / ATCC BAA-1091).